Reading from the N-terminus, the 108-residue chain is UPF0060 membrane protein YE2027 (108 aa).

4 consecutive transmembrane segments (helical) span residues 6 to 26, 29 to 49, 59 to 79, and 85 to 105; these read LLFFVTALAEIIGCFLPYLWL, GASMWLLLPAAASLALFVWLL, VYAAYGGVYVATALIWLRVVD, and LFDWVGAAVALVGMLIIVAGW.

Belongs to the UPF0060 family.

It localises to the cell inner membrane. The polypeptide is UPF0060 membrane protein YE2027 (Yersinia enterocolitica serotype O:8 / biotype 1B (strain NCTC 13174 / 8081)).